Reading from the N-terminus, the 350-residue chain is Bifunctional methylenetetrahydrofolate dehydrogenase/cyclohydrolase, mitochondrial (350 aa).

The transit peptide at 1 to 35 (MAAASFITSLVTRLLRSAQSGRLHQRPFHLSAVRN) directs the protein to the mitochondrion. At Lys50 the chain carries N6-acetyllysine; alternate. Residue Lys50 forms a Glycyl lysine isopeptide (Lys-Gly) (interchain with G-Cter in SUMO2); alternate linkage. Substrate contacts are provided by residues 84–88 (YVLNK) and 131–133 (VQL). NAD(+)-binding positions include 200–202 (GRS) and Arg233. 309–313 (PGGVG) provides a ligand contact to substrate.

This sequence belongs to the tetrahydrofolate dehydrogenase/cyclohydrolase family. As to quaternary structure, homodimer. Mg(2+) is required as a cofactor.

The protein localises to the mitochondrion. The enzyme catalyses (6R)-5,10-methylene-5,6,7,8-tetrahydrofolate + NAD(+) = (6R)-5,10-methenyltetrahydrofolate + NADH. The catalysed reaction is (6R)-5,10-methenyltetrahydrofolate + H2O = (6R)-10-formyltetrahydrofolate + H(+). In terms of biological role, although its dehydrogenase activity is NAD-specific, it can also utilize NADP at a reduced efficiency. In Bos taurus (Bovine), this protein is Bifunctional methylenetetrahydrofolate dehydrogenase/cyclohydrolase, mitochondrial (MTHFD2).